The following is a 445-amino-acid chain: Tubulin beta chain (445 aa).

8 residues coordinate GTP: Q11, E69, S138, G142, T143, G144, N204, and N226. E69 contributes to the Mg(2+) binding site.

Belongs to the tubulin family. In terms of assembly, dimer of alpha and beta chains. A typical microtubule is a hollow water-filled tube with an outer diameter of 25 nm and an inner diameter of 15 nM. Alpha-beta heterodimers associate head-to-tail to form protofilaments running lengthwise along the microtubule wall with the beta-tubulin subunit facing the microtubule plus end conferring a structural polarity. Microtubules usually have 13 protofilaments but different protofilament numbers can be found in some organisms and specialized cells. Mg(2+) serves as cofactor.

It is found in the cytoplasm. It localises to the cytoskeleton. Tubulin is the major constituent of microtubules, a cylinder consisting of laterally associated linear protofilaments composed of alpha- and beta-tubulin heterodimers. Microtubules grow by the addition of GTP-tubulin dimers to the microtubule end, where a stabilizing cap forms. Below the cap, tubulin dimers are in GDP-bound state, owing to GTPase activity of alpha-tubulin. The chain is Tubulin beta chain (TUB-2) from Schizophyllum commune (Split gill fungus).